Here is a 217-residue protein sequence, read N- to C-terminus: Probable transaldolase (217 aa).

Lys83 acts as the Schiff-base intermediate with substrate in catalysis.

It belongs to the transaldolase family. Type 3B subfamily.

It is found in the cytoplasm. It catalyses the reaction D-sedoheptulose 7-phosphate + D-glyceraldehyde 3-phosphate = D-erythrose 4-phosphate + beta-D-fructose 6-phosphate. It participates in carbohydrate degradation; pentose phosphate pathway; D-glyceraldehyde 3-phosphate and beta-D-fructose 6-phosphate from D-ribose 5-phosphate and D-xylulose 5-phosphate (non-oxidative stage): step 2/3. Its function is as follows. Transaldolase is important for the balance of metabolites in the pentose-phosphate pathway. This Pseudothermotoga lettingae (strain ATCC BAA-301 / DSM 14385 / NBRC 107922 / TMO) (Thermotoga lettingae) protein is Probable transaldolase.